The primary structure comprises 161 residues: Nucleotide-binding protein Rfer_2692 (161 aa).

The protein belongs to the YajQ family.

Functionally, nucleotide-binding protein. The sequence is that of Nucleotide-binding protein Rfer_2692 from Albidiferax ferrireducens (strain ATCC BAA-621 / DSM 15236 / T118) (Rhodoferax ferrireducens).